Reading from the N-terminus, the 87-residue chain is Cell division topological specificity factor (87 aa).

The protein belongs to the MinE family.

Functionally, prevents the cell division inhibition by proteins MinC and MinD at internal division sites while permitting inhibition at polar sites. This ensures cell division at the proper site by restricting the formation of a division septum at the midpoint of the long axis of the cell. This chain is Cell division topological specificity factor, found in Roseiflexus sp. (strain RS-1).